The primary structure comprises 371 residues: Serine/threonine-protein kinase 17B (371 aa).

Residues 33 to 293 (TLTPKELGRG…AESCLSHSWL (261 aa)) form the Protein kinase domain. ATP contacts are provided by residues 39–47 (LGRGKFAVV) and lysine 62. Aspartate 158 (proton acceptor) is an active-site residue. A disordered region spans residues 308–345 (SESSQTQDLSLRSSEDKTPKSCNGSCGDREDKENIPED). A compositionally biased stretch (polar residues) spans 309–319 (ESSQTQDLSLR).

Belongs to the protein kinase superfamily. CAMK Ser/Thr protein kinase family. DAP kinase subfamily. In terms of assembly, interacts with CHP1; the interaction induces CHP1 to translocate from the Golgi to the nucleus. Autophosphorylated. As to expression, highly expressed in thymus, spleen, and testis, lower levels present in the brain.

The protein localises to the nucleus. The protein resides in the cell membrane. Its subcellular location is the endoplasmic reticulum-Golgi intermediate compartment. The catalysed reaction is L-seryl-[protein] + ATP = O-phospho-L-seryl-[protein] + ADP + H(+). It carries out the reaction L-threonyl-[protein] + ATP = O-phospho-L-threonyl-[protein] + ADP + H(+). Functionally, acts as a positive regulator of apoptosis. Phosphorylates myosin light chains. The protein is Serine/threonine-protein kinase 17B (Stk17b) of Rattus norvegicus (Rat).